A 235-amino-acid chain; its full sequence is Elongation factor Tu, chloroplastic (235 aa).

The tr-type G domain occupies 1–125 (KNMITGAAQM…EVDNYIPLPT (125 aa)). Residue 47 to 50 (NKAD) participates in GTP binding.

The protein belongs to the TRAFAC class translation factor GTPase superfamily. Classic translation factor GTPase family. EF-Tu/EF-1A subfamily.

The protein localises to the plastid. The protein resides in the chloroplast. It catalyses the reaction GTP + H2O = GDP + phosphate + H(+). Functionally, GTP hydrolase that promotes the GTP-dependent binding of aminoacyl-tRNA to the A-site of ribosomes during protein biosynthesis. This Bryopsis plumosa (Green alga) protein is Elongation factor Tu, chloroplastic (tufA).